The primary structure comprises 245 residues: Carboxymethylenebutenolidase homolog (245 aa).

A2 is modified (N-acetylalanine). Residues C132, D179, and H212 contribute to the active site. Residue S223 is modified to Phosphoserine.

This sequence belongs to the dienelactone hydrolase family.

It localises to the cytoplasm. The protein resides in the cytosol. In terms of biological role, cysteine hydrolase. This chain is Carboxymethylenebutenolidase homolog (Cmbl), found in Rattus norvegicus (Rat).